Consider the following 1357-residue polypeptide: Protein CFT1 (1357 aa).

The tract at residues 445 to 465 (TREAHNPSSGTNSLMDINDDD) is disordered. Residues 450 to 459 (NPSSGTNSLM) show a composition bias toward polar residues.

Belongs to the CFT1 family. As to quaternary structure, component of the cleavage and polyadenylation factor (CPF) complex, which is composed of at least PTI1, SYC1, SSU72, GLC7, MPE1, REF2, PFS2, PTA1, YSH1/BRR5, SWD2, CFT2/YDH1, YTH1, CFT1/YHH1, FIP1 and PAP1. Interacts with the phosphorylated CTD domain of RPB1/RNA polymerase II.

The protein localises to the nucleus. Functionally, RNA-binding component of the cleavage and polyadenylation factor (CPF) complex, which plays a key role in polyadenylation-dependent pre-mRNA 3'-end formation and cooperates with cleavage factors including the CFIA complex and NAB4/CFIB. Involved in poly(A) site recognition. May be involved in coupling transcription termination and mRNA 3'-end formation. The polypeptide is Protein CFT1 (CFT1) (Saccharomyces cerevisiae (strain ATCC 204508 / S288c) (Baker's yeast)).